Consider the following 416-residue polypeptide: UDP-N-acetylglucosamine 1-carboxyvinyltransferase (416 aa).

22 to 23 provides a ligand contact to phosphoenolpyruvate; the sequence is KN. Position 91 (R91) interacts with UDP-N-acetyl-alpha-D-glucosamine. Catalysis depends on C115, which acts as the Proton donor. Position 115 is a 2-(S-cysteinyl)pyruvic acid O-phosphothioketal (C115). Residues 120–124, D303, and I325 contribute to the UDP-N-acetyl-alpha-D-glucosamine site; that span reads RPIDL.

Belongs to the EPSP synthase family. MurA subfamily.

It localises to the cytoplasm. It catalyses the reaction phosphoenolpyruvate + UDP-N-acetyl-alpha-D-glucosamine = UDP-N-acetyl-3-O-(1-carboxyvinyl)-alpha-D-glucosamine + phosphate. Its pathway is cell wall biogenesis; peptidoglycan biosynthesis. Functionally, cell wall formation. Adds enolpyruvyl to UDP-N-acetylglucosamine. The protein is UDP-N-acetylglucosamine 1-carboxyvinyltransferase of Lawsonia intracellularis (strain PHE/MN1-00).